A 513-amino-acid chain; its full sequence is MEQLSEEMIVVLDFGGQYNQLITRRIRDLGVYSELHPNTITAEQLKEMKPKGIIFSGGPNSAYAEGAPKCDPAIFDLGVPILGICYGMQLMTQHFGGKVDAAEHREYGKATITVENQSKLFQGLPVEQTVWMSHGDLIVAPPEGFVVDAQNPSCPVAAMSDEARNYYGVQFQPEVRHSQFGDDMLKNFAFAVCGCEGNWSMENFIELEMEKIREQVGDKQVLCALSGGVDSSVVAVLIHKAIGDQLTCMFIDHGLLRKGEADSVMKTFSEGFNMNVIKIDAKDRFLSKLEGVSDPEQKRKIIGNEFIYVFEEEASKLKDMDFLAQGTLYTDIIESGTATAQTIKSHHNVGGLPEDMRFELIEPLNTLFKDEVRKLGTELGIPDEVVWRQPFPGPGLGIRVLGEITEEKLEIVRESDAILREEIKKAGLDREIWQYFTALPNMRSVGVMGDARTYDYTVGIRAVTSIDGMTSDWARIPWDVLEIISTRIVNEVKHVNRVVYDITSKPPATIEWE.

A Glutamine amidotransferase type-1 domain is found at 8-198 (MIVVLDFGGQ…AFAVCGCEGN (191 aa)). Cys-85 functions as the Nucleophile in the catalytic mechanism. Glu-174 is an active-site residue. A GMPS ATP-PPase domain is found at 199–388 (WSMENFIELE…LGIPDEVVWR (190 aa)). Residue 226–232 (SGGVDSS) participates in ATP binding.

In terms of assembly, homodimer.

It carries out the reaction XMP + L-glutamine + ATP + H2O = GMP + L-glutamate + AMP + diphosphate + 2 H(+). The protein operates within purine metabolism; GMP biosynthesis; GMP from XMP (L-Gln route): step 1/1. Its function is as follows. Catalyzes the synthesis of GMP from XMP. This chain is Putative GMP synthase [glutamine-hydrolyzing] (guaA), found in Halalkalibacterium halodurans (strain ATCC BAA-125 / DSM 18197 / FERM 7344 / JCM 9153 / C-125) (Bacillus halodurans).